Reading from the N-terminus, the 352-residue chain is N-acetyl-gamma-glutamyl-phosphate reductase (352 aa).

Residue cysteine 155 is part of the active site.

It belongs to the NAGSA dehydrogenase family. Type 1 subfamily.

The protein localises to the cytoplasm. The catalysed reaction is N-acetyl-L-glutamate 5-semialdehyde + phosphate + NADP(+) = N-acetyl-L-glutamyl 5-phosphate + NADPH + H(+). It functions in the pathway amino-acid biosynthesis; L-arginine biosynthesis; N(2)-acetyl-L-ornithine from L-glutamate: step 3/4. Functionally, catalyzes the NADPH-dependent reduction of N-acetyl-5-glutamyl phosphate to yield N-acetyl-L-glutamate 5-semialdehyde. The chain is N-acetyl-gamma-glutamyl-phosphate reductase from Gloeothece citriformis (strain PCC 7424) (Cyanothece sp. (strain PCC 7424)).